The following is a 75-amino-acid chain: Caerin 1.11 (75 aa).

Residues 1 to 22 (MASLKKSLFLVLFLGFVSVSIC) form the signal peptide. Residues 23–49 (EEEKRQEDEDEHEEEGENQEEGSEEKR) constitute a propeptide that is removed on maturation. The interval 24-48 (EEKRQEDEDEHEEEGENQEEGSEEK) is disordered. Residues 30 to 45 (DEDEHEEEGENQEEGS) show a composition bias toward acidic residues. Residue Leu-74 is modified to Leucine amide.

It belongs to the frog skin active peptide (FSAP) family. Caerin subfamily. In terms of tissue distribution, expressed by the skin glands.

It localises to the secreted. Its subcellular location is the target cell membrane. Functionally, cationic amphipathic alpha-helical antimicrobial peptide with weak or no activity against both Gram-positive and Gram-negative bacteria. Is weakly active against E.coli (MIC=25 uM), E.cloacae (MIC=50 uM), K.pneumoniae (MIC=25 uM), and S.haemolyticus (MIC=50 uM). Has no activity against S.typhimurium, S.enteritidis, B.megaterium, and S.aureus (MIC&gt;100 uM). This chain is Caerin 1.11, found in Ranoidea caerulea (Green tree frog).